The primary structure comprises 189 residues: dCTP deaminase (189 aa).

Residues 112-117, 136-138, glutamine 157, tyrosine 171, and glutamine 181 each bind dCTP; these read KSTYAR and TLE. Glutamate 138 serves as the catalytic Proton donor/acceptor.

The protein belongs to the dCTP deaminase family. In terms of assembly, homotrimer.

The enzyme catalyses dCTP + H2O + H(+) = dUTP + NH4(+). The protein operates within pyrimidine metabolism; dUMP biosynthesis; dUMP from dCTP (dUTP route): step 1/2. Catalyzes the deamination of dCTP to dUTP. The protein is dCTP deaminase of Xanthomonas euvesicatoria pv. vesicatoria (strain 85-10) (Xanthomonas campestris pv. vesicatoria).